A 130-amino-acid chain; its full sequence is Small ribosomal subunit protein uS8 (130 aa).

Belongs to the universal ribosomal protein uS8 family. In terms of assembly, part of the 30S ribosomal subunit.

One of the primary rRNA binding proteins, it binds directly to 16S rRNA central domain where it helps coordinate assembly of the platform of the 30S subunit. The chain is Small ribosomal subunit protein uS8 from Methanothermobacter thermautotrophicus (strain ATCC 29096 / DSM 1053 / JCM 10044 / NBRC 100330 / Delta H) (Methanobacterium thermoautotrophicum).